Here is a 140-residue protein sequence, read N- to C-terminus: 3-hydroxyacyl-[acyl-carrier-protein] dehydratase FabZ (140 aa).

Residue His48 is part of the active site.

This sequence belongs to the thioester dehydratase family. FabZ subfamily.

Its subcellular location is the cytoplasm. The enzyme catalyses a (3R)-hydroxyacyl-[ACP] = a (2E)-enoyl-[ACP] + H2O. Its function is as follows. Involved in unsaturated fatty acids biosynthesis. Catalyzes the dehydration of short chain beta-hydroxyacyl-ACPs and long chain saturated and unsaturated beta-hydroxyacyl-ACPs. This chain is 3-hydroxyacyl-[acyl-carrier-protein] dehydratase FabZ, found in Caldicellulosiruptor bescii (strain ATCC BAA-1888 / DSM 6725 / KCTC 15123 / Z-1320) (Anaerocellum thermophilum).